Reading from the N-terminus, the 98-residue chain is Aspartyl/glutamyl-tRNA(Asn/Gln) amidotransferase subunit C (98 aa).

It belongs to the GatC family. As to quaternary structure, heterotrimer of A, B and C subunits.

The enzyme catalyses L-glutamyl-tRNA(Gln) + L-glutamine + ATP + H2O = L-glutaminyl-tRNA(Gln) + L-glutamate + ADP + phosphate + H(+). It catalyses the reaction L-aspartyl-tRNA(Asn) + L-glutamine + ATP + H2O = L-asparaginyl-tRNA(Asn) + L-glutamate + ADP + phosphate + 2 H(+). Allows the formation of correctly charged Asn-tRNA(Asn) or Gln-tRNA(Gln) through the transamidation of misacylated Asp-tRNA(Asn) or Glu-tRNA(Gln) in organisms which lack either or both of asparaginyl-tRNA or glutaminyl-tRNA synthetases. The reaction takes place in the presence of glutamine and ATP through an activated phospho-Asp-tRNA(Asn) or phospho-Glu-tRNA(Gln). This chain is Aspartyl/glutamyl-tRNA(Asn/Gln) amidotransferase subunit C, found in Microcystis aeruginosa (strain NIES-843 / IAM M-2473).